The sequence spans 193 residues: Putative F-box protein At1g31072 (193 aa).

The F-box domain maps to 4–53 (EKTLDSIPIDVFLDIFSRLPAKSVGRSCCVSNRWASILGSQDFKELFLTM).

The chain is Putative F-box protein At1g31072 from Arabidopsis thaliana (Mouse-ear cress).